Here is a 112-residue protein sequence, read N- to C-terminus: Protein lin-52 homolog (112 aa).

Belongs to the lin-52 family. As to quaternary structure, component of the DREAM complex. In terms of tissue distribution, expressed in the brain, liver and retina. Highly expressed in the retinal ganglion cell and inner nuclear layers at the parr stage. Expressed at a lower level in inner segments of some retinal photoreceptors.

Functionally, may be involved in retinal development. The chain is Protein lin-52 homolog (lin52) from Oncorhynchus mykiss (Rainbow trout).